The sequence spans 2163 residues: Myosin-VIIa (2163 aa).

Residues 58 to 728 enclose the Myosin motor domain; it reads QGVEDMISLG…HDLFLEQERD (671 aa). Residue 151-158 coordinates ATP; that stretch reads GESGAGKT. 2 actin-binding regions span residues 607–629 and 707–721; these read LDSLMKTLSSCQPFFIRCIKPNE and QLGHTKVFLKDAHDL. 4 IQ domains span residues 731 to 753, 754 to 783, 800 to 822, and 823 to 852; these read LTRKILILQRSIRGWVYRRRFLR, MRQAAVTIQKFWKGYAQRQRYKKMKIGYMR, LRGHIVRLQARIRGYLVRREYGL, and KMWAVIKIQSHVRRMIAMNRYQKLKLEYRR. The stretch at 886-914 forms a coiled coil; the sequence is RLNEIERKEIEQELEERRRVEVKKNIIND. Positions 937–958 are disordered; the sequence is PDSSSEAPTPHGGRETSVFNDL. Residues 1003–1239 enclose the MyTH4 1 domain; the sequence is YSRKPLKHPL…PSWLELQATK (237 aa). Residues 1244–1554 form the FERM 1 domain; sequence IMLPITFMDG…YFLEGLKKRS (311 aa). In terms of domain architecture, SH3 spans 1552-1621; it reads KRSKFVIALQ…PAEIVYVLPS (70 aa). The 149-residue stretch at 1697-1845 folds into the MyTH4 2 domain; the sequence is YSREPLKQPL…PHQVEVEAIQ (149 aa). Residues 1851–2154 enclose the FERM 2 domain; the sequence is IFHKVYFPDD…SYISLMLTNM (304 aa).

It belongs to the TRAFAC class myosin-kinesin ATPase superfamily. Myosin family. Homodimerizes in a two headed molecule through the formation of a coiled-coil rod.

It localises to the cytoplasm. Myosins are actin-based motor molecules with ATPase activity. Unconventional myosins serve in intracellular movements: can function in cells as a single-molecule cargo transporter. A very slow and high-duty-ratio motor, may be suitable for tension maintenance of actin filaments. Their highly divergent tails are presumed to bind to membranous compartments, which would be moved relative to actin filaments. Plays a key role in the formation of cellular projections and other actin-based functions required for embryonic and larval viability. Necessary for auditory transduction: plays a role in Johnston organ (JO) organization by functioning in scolopidial apical attachment and therefore to acoustic stimulus propagation from the antenna a2/a3 joint to transducing elements. The sequence is that of Myosin-VIIa from Aedes aegypti (Yellowfever mosquito).